A 302-amino-acid polypeptide reads, in one-letter code: Sushi domain-containing protein 6 (302 aa).

Positions 1–39 (MCHGKIAPKSSSEFVVTSVGHGVFLQLVILCALLGDGLA) are cleaved as a signal peptide. A Sushi domain is found at 40-104 (SVCPLPPEPE…TPAMEVSCHL (65 aa)). 2 cysteine pairs are disulfide-bonded: Cys42–Cys89 and Cys74–Cys102. A helical transmembrane segment spans residues 120 to 140 (IVASTASSVALILLLVVLFVL). Disordered regions lie at residues 202 to 241 (GSAP…CEAW) and 256 to 302 (TSSW…LKEA). Composition is skewed to polar residues over residues 212–222 (REQQLQGQEAC), 256–267 (TSSWVAGSGSSR), and 279–290 (SDIQSLLSLTSE).

It is found in the membrane. In terms of biological role, may play a role in growth-suppressive activity and cell death. May be involved in the production of chemokine molecules in umbilical vein endothelial cells (HUVECs) cultured in THP1 monocyte LPS-induced medium. Plays a role in preventing tumor onset. In Mus musculus (Mouse), this protein is Sushi domain-containing protein 6.